The primary structure comprises 412 residues: Decapping nuclease RAI1 (412 aa).

Glu-196 is a binding site for a divalent metal cation. Positions 228 and 245 each coordinate substrate. Positions 247, 265, and 266 each coordinate a divalent metal cation. Lys-267 and Gln-291 together coordinate substrate.

It belongs to the DXO/Dom3Z family. As to quaternary structure, interacts with exr-1/rat1; the interaction is direct, stabilizes exr-1 protein structure and stimulates its exoribonuclease activity. The interaction also stimulates rai1 pyrophosphohydrolase activity, probably by recruiting it to mRNA substrates. A divalent metal cation serves as cofactor.

It localises to the nucleus. It carries out the reaction a 5'-end NAD(+)-phospho-ribonucleoside in mRNA + H2O = a 5'-end phospho-ribonucleoside in mRNA + NAD(+) + H(+). The catalysed reaction is a 5'-end (N(7)-methyl 5'-triphosphoguanosine)-ribonucleoside-ribonucleotide in mRNA + H2O = a (N(7)-methyl 5'-triphosphoguanosine)-nucleoside + a 5'-end phospho-ribonucleoside in mRNA + H(+). The enzyme catalyses a 5'-end triphospho-ribonucleoside in mRNA + H2O = a 5'-end phospho-ribonucleoside in mRNA + diphosphate + H(+). In terms of biological role, decapping enzyme for NAD-capped RNAs: specifically hydrolyzes the nicotinamide adenine dinucleotide (NAD) cap from a subset of RNAs by removing the entire NAD moiety from the 5'-end of an NAD-capped RNA. The NAD-cap is present at the 5'-end of some RNAs and snoRNAs. In contrast to the canonical 5'-end N7 methylguanosine (m7G) cap, the NAD cap promotes mRNA decay. Also acts as a non-canonical decapping enzyme that removes the entire cap structure of m7G capped or incompletely capped RNAs. Has decapping activity toward incomplete 5'-end m7G cap mRNAs such as unmethylated 5'-end-capped RNA (cap0), while it has no activity toward 2'-O-ribose methylated m7G cap (cap1). Also possesses RNA 5'-pyrophosphohydrolase activity by hydrolyzing the 5'-end triphosphate to release pyrophosphates. Stimulates exoribonuclease activity of Rat1, allowing it to degrade RNAs with stable secondary structure more effectively. The polypeptide is Decapping nuclease RAI1 (rai1) (Neurospora crassa (strain ATCC 24698 / 74-OR23-1A / CBS 708.71 / DSM 1257 / FGSC 987)).